The chain runs to 347 residues: GMP reductase (347 aa).

108 to 131 serves as a coordination point for NADP(+); sequence TDFIKLSEILAKSEDLNFICIDIA. The K(+) site is built by G181 and G183. Residue C186 is the Thioimidate intermediate of the active site. Residue 216-239 coordinates NADP(+); sequence IIGDGGCSCAGDVAKAFGGGADFV.

The protein belongs to the IMPDH/GMPR family. GuaC type 1 subfamily. In terms of assembly, homotetramer.

The catalysed reaction is IMP + NH4(+) + NADP(+) = GMP + NADPH + 2 H(+). Catalyzes the irreversible NADPH-dependent deamination of GMP to IMP. It functions in the conversion of nucleobase, nucleoside and nucleotide derivatives of G to A nucleotides, and in maintaining the intracellular balance of A and G nucleotides. The protein is GMP reductase of Shewanella pealeana (strain ATCC 700345 / ANG-SQ1).